The primary structure comprises 1222 residues: ATP-dependent helicase/nuclease subunit A (1222 aa).

One can recognise a UvrD-like helicase ATP-binding domain in the interval 39–495 (QKRTAQQIEA…ILLKENFRSQ (457 aa)). 60 to 67 (ASAGSGKT) lines the ATP pocket. Residues 524 to 810 (QLIAGSHAQT…NLMTIHKSKG (287 aa)) enclose the UvrD-like helicase C-terminal domain.

The protein belongs to the helicase family. AddA subfamily. Heterodimer of AddA and AddB/RexB. The cofactor is Mg(2+).

The enzyme catalyses Couples ATP hydrolysis with the unwinding of duplex DNA by translocating in the 3'-5' direction.. The catalysed reaction is ATP + H2O = ADP + phosphate + H(+). The heterodimer acts as both an ATP-dependent DNA helicase and an ATP-dependent, dual-direction single-stranded exonuclease. Recognizes the chi site generating a DNA molecule suitable for the initiation of homologous recombination. The AddA nuclease domain is required for chi fragment generation; this subunit has the helicase and 3' -&gt; 5' nuclease activities. This is ATP-dependent helicase/nuclease subunit A from Streptococcus pyogenes serotype M18 (strain MGAS8232).